A 113-amino-acid chain; its full sequence is UPF0212 protein MmarC6_1165 (113 aa).

Belongs to the UPF0212 family.

The protein is UPF0212 protein MmarC6_1165 of Methanococcus maripaludis (strain C6 / ATCC BAA-1332).